Here is a 165-residue protein sequence, read N- to C-terminus: Crossover junction endodeoxyribonuclease RuvC (165 aa).

Residues D8, E69, and H141 contribute to the active site. Residues D8, E69, and H141 each contribute to the Mg(2+) site.

Belongs to the RuvC family. As to quaternary structure, homodimer which binds Holliday junction (HJ) DNA. The HJ becomes 2-fold symmetrical on binding to RuvC with unstacked arms; it has a different conformation from HJ DNA in complex with RuvA. In the full resolvosome a probable DNA-RuvA(4)-RuvB(12)-RuvC(2) complex forms which resolves the HJ. The cofactor is Mg(2+).

The protein localises to the cytoplasm. The catalysed reaction is Endonucleolytic cleavage at a junction such as a reciprocal single-stranded crossover between two homologous DNA duplexes (Holliday junction).. The RuvA-RuvB-RuvC complex processes Holliday junction (HJ) DNA during genetic recombination and DNA repair. Endonuclease that resolves HJ intermediates. Cleaves cruciform DNA by making single-stranded nicks across the HJ at symmetrical positions within the homologous arms, yielding a 5'-phosphate and a 3'-hydroxyl group; requires a central core of homology in the junction. The consensus cleavage sequence is 5'-(A/T)TT(C/G)-3'. Cleavage occurs on the 3'-side of the TT dinucleotide at the point of strand exchange. HJ branch migration catalyzed by RuvA-RuvB allows RuvC to scan DNA until it finds its consensus sequence, where it cleaves and resolves the cruciform DNA. The polypeptide is Crossover junction endodeoxyribonuclease RuvC (Wolbachia pipientis subsp. Culex pipiens (strain wPip)).